The sequence spans 121 residues: uncharacterized protein (121 aa).

This is an uncharacterized protein from Microplitis demolitor (Parasitoid wasp).